A 592-amino-acid chain; its full sequence is Putative nucleoside-triphosphatase (592 aa).

Residue Glu-200 is the Proton acceptor of the active site.

Belongs to the GDA1/CD39 NTPase family.

It catalyses the reaction a ribonucleoside 5'-triphosphate + H2O = a ribonucleoside 5'-diphosphate + phosphate + H(+). This Toxoplasma gondii protein is Putative nucleoside-triphosphatase (NTP4).